The sequence spans 149 residues: Down syndrome critical region protein 9 (149 aa).

The segment at 1–41 is disordered; it reads MGRICPVNSRARRLRARPGRPSGDSLPYHQLQGGAPRLWSP.

The chain is Down syndrome critical region protein 9 (DSCR9) from Pan troglodytes (Chimpanzee).